A 6919-amino-acid polypeptide reads, in one-letter code: Nonribosomal peptide synthetase easA (6919 aa).

In terms of domain architecture, Carrier 1 spans 17 to 93 (TNNEVVEKDI…ELCQSVKLAE (77 aa)). Ser-54 is subject to O-(pantetheine 4'-phosphoryl)serine. The tract at residues 123–427 (EAQKLYASTK…FLRKVKDTRM (305 aa)) is epimerization 1. The interval 294–319 (FRRSTPVESTNDERNTNERQHNRHQN) is disordered. Positions 304–319 (NDERNTNERQHNRHQN) are enriched in basic and acidic residues. Residues 604-981 (LNVELDCGRL…ISTTQEINQL (378 aa)) form a condensation 1 region. Residues 1003 to 1394 (QRLRRPDAWA…GRRDTQIKVR (392 aa)) form an adenylation 1 region. Residues 1531-1608 (EPETLLERQV…QLAQTAEVKD (78 aa)) form the Carrier 2 domain. Ser-1569 carries the O-(pantetheine 4'-phosphoryl)serine modification. The tract at residues 1617–2031 (LLSPMQKWYF…ANAISALGTE (415 aa)) is epimerization 2. Residues 2072 to 2509 (VEDIYPCSPI…VGQLNTVTPK (438 aa)) form a condensation 2 region. The adenylation 2 stretch occupies residues 2541–2930 (RPNATAVCAW…ARKDSQVKVR (390 aa)). The region spanning 3067 to 3143 (APSTFMEKKL…EMAAHLEAQM (77 aa)) is the Carrier 3 domain. Residue Ser-3104 is modified to O-(pantetheine 4'-phosphoryl)serine. The segment at 3188 to 3599 (EDVYPCTPLQ…LLSKDEARRL (412 aa)) is condensation 3. Residues 3620-4018 (QHVSTNPYAP…GRRDGQVKIR (399 aa)) are adenylation 3. The region spanning 4151–4228 (TPSTSEEKNI…QLAKKAVIKT (78 aa)) is the Carrier 4 domain. Ser-4188 is subject to O-(pantetheine 4'-phosphoryl)serine. Residues 4282-4708 (ESIYYCSPIQ…EIDVIPTGDV (427 aa)) are condensation 4. The interval 4732–5133 (EQALSQPGAQ…GRADGQIKIR (402 aa)) is adenylation 4. The Carrier 5 domain occupies 5260 to 5337 (ALSTETERRL…DMANTIANSE (78 aa)). An O-(pantetheine 4'-phosphoryl)serine modification is found at Ser-5296. The condensation 5 stretch occupies residues 5380 to 5775 (EDAYPCTPLQ…VFGQLQSAAN (396 aa)). Residues 5824–6216 (SCPDAQAVHA…IGRRDTQVKI (393 aa)) are adenylation 5. The region spanning 6344 to 6421 (EPATVTERLL…DMATLIDRKT (78 aa)) is the Carrier 6 domain. Residue Ser-6381 is modified to O-(pantetheine 4'-phosphoryl)serine.

It participates in antibiotic biosynthesis. In terms of biological role, nonribosomal peptide synthetase; part of the gene cluster that mediates the biosynthesis of emericellamides, secondary metabolites acting as antibiotics. The biosynthesis of emericellamides initiates from the highly reducing polyketide synthase easB which catalyzes the formation of the linear polyketide chain. EasB produces several polyketides that can be further processed by the downstream enzymes. The polyketides are released from easB as linear polyketide carboxylic acids, which are converted to CoA thioesters by the acyl-CoA ligase easD. The substrates are then loaded onto the acyltransferase easC, which shuttles them to the first thiolation (T) domain of the nonribosomal peptide synthetase easA. EasA then performs condensation of the polyketides with one glycine, two alanine, one valine and one leucine residues. A last step of cyclization leads to the production of emericellamides. The sequence is that of Nonribosomal peptide synthetase easA from Emericella nidulans (strain FGSC A4 / ATCC 38163 / CBS 112.46 / NRRL 194 / M139) (Aspergillus nidulans).